The chain runs to 263 residues: Putative hydro-lyase Pden_0321 (263 aa).

It belongs to the D-glutamate cyclase family.

This chain is Putative hydro-lyase Pden_0321, found in Paracoccus denitrificans (strain Pd 1222).